The chain runs to 442 residues: MKEQALITPRTLSGFKDRLPQEAMAKSRLLRTVSEVFEGFGFVPIETPHLEYAEILVKQGSDEIQKELYRFFDHGGRDVALRFDQTVPLARFISQHRNALGLPFKRYAIGNVFRGERAQRGRYREFTQCDFDFIGSESIGSDAEIIQVIYASLKALGIERFTISMNNRKILNGICDYFGVKEQTSDVLRIIDKLDKIGEESVIKELVEELGLSQESARGILGFTSLKQERSSEEFFAKVASYEGLSDSLREGMGEMRALYAILDTLEMDRACYKINFSIARGLGYYTGIVYETTLDALPSIGSVCSGGRYDNLTQSFSKERMSGVGASIGVDRLLAALEELGLLEGRGTSAQVLVACMEESQLAYSYKVAERLRTLGIKSEVYPEAVKPKRSLAYANSKGHPYVAVIGEDELKQGVVTLKDMQWGDQKPCISIEAAAEILLG.

Belongs to the class-II aminoacyl-tRNA synthetase family. Homodimer.

It is found in the cytoplasm. The enzyme catalyses tRNA(His) + L-histidine + ATP = L-histidyl-tRNA(His) + AMP + diphosphate + H(+). The polypeptide is Histidine--tRNA ligase (Wolinella succinogenes (strain ATCC 29543 / DSM 1740 / CCUG 13145 / JCM 31913 / LMG 7466 / NCTC 11488 / FDC 602W) (Vibrio succinogenes)).